A 316-amino-acid chain; its full sequence is Annexin D5 (316 aa).

Alanine 2 bears the N-acetylalanine mark. 4 Annexin repeats span residues 11–82 (PSPR…LWMP), 83–154 (EAVE…AYLN), 166–238 (ASVE…TILQ), and 242–313 (NSCF…SLLG). Residues phenylalanine 24, glycine 26, glycine 28, and glutamate 68 each contribute to the Ca(2+) site. Serine 95 carries the post-translational modification Phosphoserine. Threonine 112 is subject to Phosphothreonine. Residue glycine 259 coordinates Ca(2+). The residue at position 284 (tyrosine 284) is a Phosphotyrosine. 2 residues coordinate Ca(2+): aspartate 299 and threonine 300.

This sequence belongs to the annexin (TC 1.A.31.1) family. Expressed mainly in roots and flowers. Lower in stems and leaves.

The protein is Annexin D5 (ANN5) of Arabidopsis thaliana (Mouse-ear cress).